Reading from the N-terminus, the 277-residue chain is Sulfur carrier protein FdhD (277 aa).

Cysteine 121 acts as the Cysteine persulfide intermediate in catalysis. 260–265 lines the Mo-bis(molybdopterin guanine dinucleotide) pocket; sequence FCKPGR.

This sequence belongs to the FdhD family.

It is found in the cytoplasm. In terms of biological role, required for formate dehydrogenase (FDH) activity. Acts as a sulfur carrier protein that transfers sulfur from IscS to the molybdenum cofactor prior to its insertion into FDH. The protein is Sulfur carrier protein FdhD of Shigella flexneri serotype 5b (strain 8401).